Consider the following 105-residue polypeptide: Thioredoxin (105 aa).

The Thioredoxin domain occupies 1-105; the sequence is MVNNVTDISF…SLLDWINKSI (105 aa). Residues cysteine 30 and cysteine 33 are joined by a disulfide bond.

Belongs to the thioredoxin family.

Its function is as follows. Component of the thioredoxin-thioredoxin reductase system. Participates in various redox reactions through the reversible oxidation of its active center dithiol to a disulfide and catalyzes dithiol-disulfide exchange reactions. The polypeptide is Thioredoxin (trxA) (Rickettsia typhi (strain ATCC VR-144 / Wilmington)).